The sequence spans 383 residues: Probable protein phosphatase 2C 13 (383 aa).

One can recognise a PPM-type phosphatase domain in the interval 78 to 349 (RSGSFADIRS…DNMTVIVICF (272 aa)). D121, G122, D297, and D340 together coordinate Mn(2+).

It belongs to the PP2C family. Mg(2+) serves as cofactor. Mn(2+) is required as a cofactor.

It carries out the reaction O-phospho-L-seryl-[protein] + H2O = L-seryl-[protein] + phosphate. The enzyme catalyses O-phospho-L-threonyl-[protein] + H2O = L-threonyl-[protein] + phosphate. This Arabidopsis thaliana (Mouse-ear cress) protein is Probable protein phosphatase 2C 13.